The primary structure comprises 65 residues: Large ribosomal subunit protein bL35 (65 aa).

Disordered stretches follow at residues 1-23 (MPKIKTNRAAAKRFKKTGSGKVK) and 29-48 (GSHILAKKSRKRKRDLRQSH). Basic residues predominate over residues 33 to 43 (LAKKSRKRKRD).

This sequence belongs to the bacterial ribosomal protein bL35 family.

In Desulfatibacillum aliphaticivorans, this protein is Large ribosomal subunit protein bL35.